Consider the following 320-residue polypeptide: Transcription factor bHLH96 (320 aa).

The disordered stretch occupies residues 30-121; the sequence is EEEDQDPQDT…RSSKNKEEIE (92 aa). A compositionally biased stretch (acidic residues) spans 65-76; the sequence is YSDDYNYNEEDL. A compositionally biased stretch (basic residues) spans 104-114; that stretch reads GRRKRRRTRSS. Residues 122 to 173 enclose the bHLH domain; that stretch reads NQRMTHIAVERNRRKQMNEYLAVLRSLMPPYYAQRGDQASIVGGAINYLKEL. Residues 184 to 206 are disordered; sequence VKTATEDTGAGHDQTKTTSASSS. The ACT domain maps to 244 to 320; it reads SLKILAKKRP…RRIEEESSFS (77 aa).

As to quaternary structure, homodimer. Expressed constitutively in roots, leaves, stems, and flowers.

The protein localises to the nucleus. This chain is Transcription factor bHLH96 (BHLH96), found in Arabidopsis thaliana (Mouse-ear cress).